The primary structure comprises 480 residues: Probable GH family 25 lysozyme 3 (480 aa).

The first 20 residues, 1 to 20 (MNKLILSILSVLLIVSIASA), serve as a signal peptide directing secretion. Residues 21–231 (GNGIDISSGT…STTSSSATSS (211 aa)) form the Ch-type lysozyme domain. Catalysis depends on residues Asp-25, Asp-114, and Glu-116. Positions 219–472 (SGSSTTSSSA…SSGSGNYTSG (254 aa)) are enriched in low complexity. The interval 219–480 (SGSSTTSSSA…SGSGNGAFLF (262 aa)) is disordered. Asn-423, Asn-428, Asn-437, Asn-446, and Asn-468 each carry an N-linked (GlcNAc...) asparagine glycan.

The protein belongs to the glycosyl hydrolase 25 family.

It localises to the secreted. The enzyme catalyses Hydrolysis of (1-&gt;4)-beta-linkages between N-acetylmuramic acid and N-acetyl-D-glucosamine residues in a peptidoglycan and between N-acetyl-D-glucosamine residues in chitodextrins.. The chain is Probable GH family 25 lysozyme 3 from Dictyostelium discoideum (Social amoeba).